We begin with the raw amino-acid sequence, 128 residues long: Con-Ins F2c (128 aa).

Residues 1–24 form the signal peptide; sequence MTTSSYFLLVALGLLLYVCRSSFG. Intrachain disulfides connect cysteine 29–cysteine 104, cysteine 41–cysteine 107, cysteine 53–cysteine 120, and cysteine 106–cysteine 111. Positions 59-89 are cleaved as a propeptide — c peptide; that stretch reads LQGGTGKKRGRASLLRKRRAFLSMLKARAKR. 4-carboxyglutamate; partial is present on glutamate 115. Serine 127 is subject to Serine amide.

This sequence belongs to the insulin family. Heterodimer of A and B chains; disulfide-linked. Expressed by the venom gland.

Its subcellular location is the secreted. This venom insulin facilitates prey capture by rapidly inducing hypoglycemic shock. Intraperitoneal injection of this peptide into zebrafish lowers blood glucose with the same potency than human insulin. In vivo, when applied to water, this peptide reduces overall locomotor activity of zebrafish larvae, observed as a significant decrease in the percentage of time spent swimming and movement frequency. The polypeptide is Con-Ins F2c (Conus floridulus (Cone snail)).